The sequence spans 206 residues: MKAEVIKLDASPAGSIELDDAIFGLEPRADILHRVVRWQRAKAQAGTHSVLGKSDVSYSTKKIYRQKGTGGARHGSKKAPIFRHGGVYKGPTPRSHAHDLNKKFRALGLKHALSSKATTGNLIVLEDIALAEGKTAMLAKAVKELGWKRVLVIDGADINENFAKAARNLEGVDVLPSIGANVYDILKRDTLVITKAGVEALEARLK.

Belongs to the universal ribosomal protein uL4 family. As to quaternary structure, part of the 50S ribosomal subunit.

One of the primary rRNA binding proteins, this protein initially binds near the 5'-end of the 23S rRNA. It is important during the early stages of 50S assembly. It makes multiple contacts with different domains of the 23S rRNA in the assembled 50S subunit and ribosome. Functionally, forms part of the polypeptide exit tunnel. This is Large ribosomal subunit protein uL4 from Cereibacter sphaeroides (strain KD131 / KCTC 12085) (Rhodobacter sphaeroides).